The following is a 75-amino-acid chain: Cytochrome c oxidase assembly factor 5 (75 aa).

The CHCH domain maps to 28-66 (QHDCVVKEGKKPSECLKEGHCRSMQVAFFECKRSMLDTR). Residues 31-42 (CVVKEGKKPSEC) carry the Cx10C motif motif. 2 cysteine pairs are disulfide-bonded: Cys31-Cys58 and Cys42-Cys48. The Cx9C motif signature appears at 48 to 58 (CRSMQVAFFEC).

The protein belongs to the PET191 family.

Functionally, involved in an early step of the mitochondrial complex IV assembly process. The protein is Cytochrome c oxidase assembly factor 5 (coa5) of Danio rerio (Zebrafish).